The sequence spans 504 residues: Glycerol kinase (504 aa).

Thr14 contributes to the ADP binding site. Residues Thr14, Thr15, and Ser16 each coordinate ATP. Thr14 is a binding site for sn-glycerol 3-phosphate. Residue Arg18 coordinates ADP. The sn-glycerol 3-phosphate site is built by Arg84, Glu85, Tyr136, and Asp246. Glycerol-binding residues include Arg84, Glu85, Tyr136, Asp246, and Gln247. ADP contacts are provided by Thr268 and Gly311. Residues Thr268, Gly311, Gln315, and Gly412 each contribute to the ATP site. Gly412 and Asn416 together coordinate ADP.

This sequence belongs to the FGGY kinase family.

It catalyses the reaction glycerol + ATP = sn-glycerol 3-phosphate + ADP + H(+). The protein operates within polyol metabolism; glycerol degradation via glycerol kinase pathway; sn-glycerol 3-phosphate from glycerol: step 1/1. With respect to regulation, inhibited by fructose 1,6-bisphosphate (FBP). Its function is as follows. Key enzyme in the regulation of glycerol uptake and metabolism. Catalyzes the phosphorylation of glycerol to yield sn-glycerol 3-phosphate. This Aliivibrio fischeri (strain ATCC 700601 / ES114) (Vibrio fischeri) protein is Glycerol kinase.